A 503-amino-acid polypeptide reads, in one-letter code: 2-isopropylmalate synthase (503 aa).

In terms of domain architecture, Pyruvate carboxyltransferase spans 4 to 264 (LYIFDTTLRD…EVSIKTEEIY (261 aa)). Residues D13, H201, H203, and N237 each coordinate Mn(2+). Residues 388–503 (KLRHLQVVSG…NQLVMLKGKD (116 aa)) are regulatory domain.

Belongs to the alpha-IPM synthase/homocitrate synthase family. LeuA type 1 subfamily. In terms of assembly, homodimer. Requires Mn(2+) as cofactor.

It is found in the cytoplasm. The enzyme catalyses 3-methyl-2-oxobutanoate + acetyl-CoA + H2O = (2S)-2-isopropylmalate + CoA + H(+). It functions in the pathway amino-acid biosynthesis; L-leucine biosynthesis; L-leucine from 3-methyl-2-oxobutanoate: step 1/4. In terms of biological role, catalyzes the condensation of the acetyl group of acetyl-CoA with 3-methyl-2-oxobutanoate (2-ketoisovalerate) to form 3-carboxy-3-hydroxy-4-methylpentanoate (2-isopropylmalate). In Dictyoglomus turgidum (strain DSM 6724 / Z-1310), this protein is 2-isopropylmalate synthase.